A 61-amino-acid chain; its full sequence is Small ribosomal subunit protein uS14 (61 aa).

Zn(2+)-binding residues include C24, C27, C40, and C43.

Belongs to the universal ribosomal protein uS14 family. Zinc-binding uS14 subfamily. In terms of assembly, part of the 30S ribosomal subunit. Contacts proteins S3 and S10. Requires Zn(2+) as cofactor.

Binds 16S rRNA, required for the assembly of 30S particles and may also be responsible for determining the conformation of the 16S rRNA at the A site. This Bifidobacterium longum (strain DJO10A) protein is Small ribosomal subunit protein uS14.